The chain runs to 100 residues: Integration host factor subunit beta (100 aa).

Residues 53–100 (LHHRPPRIGRNPKTGEPVALPGKYVPHFKPGKELRDRVNAGRHNPIQS) are disordered. A compositionally biased stretch (basic and acidic residues) spans 82-91 (PGKELRDRVN).

The protein belongs to the bacterial histone-like protein family. Heterodimer of an alpha and a beta chain.

This protein is one of the two subunits of integration host factor, a specific DNA-binding protein that functions in genetic recombination as well as in transcriptional and translational control. This Alkalilimnicola ehrlichii (strain ATCC BAA-1101 / DSM 17681 / MLHE-1) protein is Integration host factor subunit beta.